Reading from the N-terminus, the 464-residue chain is L-cystine uptake protein TcyP (464 aa).

10 helical membrane-spanning segments follow: residues 3–23, 34–54, 73–93, 107–127, 184–204, 225–245, 263–283, 347–367, 371–391, and 395–415; these read TLLV…LYYM, VFTA…IYEP, YVKL…ISAF, GLII…GIAA, PTST…FIGV, IVMR…LALM, FVLA…LLIA, AGIY…IDPL, FILT…GVGG, and FAAL…ALVI.

The protein belongs to the dicarboxylate/amino acid:cation symporter (DAACS) (TC 2.A.23) family.

It localises to the membrane. Its function is as follows. Mediates uptake of L-cystine, the oxidized form of L-cysteine. This chain is L-cystine uptake protein TcyP, found in Bacillus cereus (strain ATCC 10987 / NRS 248).